The sequence spans 1304 residues: Zinc finger CCCH domain-containing protein 4 (1304 aa).

Residues 1 to 33 show a composition bias toward pro residues; the sequence is MEAVPGTPPPPPSESPPPPSPPPPSTPSPPPCS. A disordered region spans residues 1 to 387; that stretch reads MEAVPGTPPP…SDHDKPHQQS (387 aa). The span at 53–73 shows a compositional bias: acidic residues; it reads DREDGELEEGELEDDGAEEVQ. Residues 80 to 99 show a composition bias toward basic and acidic residues; sequence ERSRKEKGEKHHSDSEEEKS. Serine 92 and serine 94 each carry phosphoserine. The stretch at 94-128 forms a coiled coil; it reads SEEEKSHRRLKRKRKKEREKEKRRSKKRRKSKHKR. Residues 100–130 are compositionally biased toward basic residues; it reads HRRLKRKRKKEREKEKRRSKKRRKSKHKRHA. Over residues 135–144 the composition is skewed to acidic residues; it reads DFSDFSDDSD. Tyrosine 155 carries the phosphotyrosine modification. Over residues 165–174 the composition is skewed to polar residues; it reads SHQQYSSSHN. Residues 194 to 218 show a composition bias toward acidic residues; it reads EDYENEQYGEYEGDEEEDMGKEDYD. Residues 219–235 are compositionally biased toward basic and acidic residues; it reads DFTKELNQYRRAKEGSS. The segment covering 238-251 has biased composition (basic residues); sequence RGSRGRGRGYRGRG. A compositionally biased stretch (gly residues) spans 252–264; sequence SRGGSRGRGMGRG. Residues 277-303 are compositionally biased toward acidic residues; the sequence is PEDEEDLYEEEIEYGESEEPMGDDDYD. A compositionally biased stretch (basic and acidic residues) spans 304–320; sequence DYSKELNQYRRSKDSRG. Over residues 322–346 the composition is skewed to basic residues; the sequence is GLSRGRGRGSRGGRGKGMGRGRGRG. The span at 357–368 shows a compositional bias: acidic residues; it reads NDDEDFYDDDMG. Basic and acidic residues predominate over residues 376–387; sequence RRSDHDKPHQQS. C3H1-type zinc fingers lie at residues 389–416, 418–445, and 446–469; these read KKGKVICKYFVEGRCTWGDHCNFSHDIE, PKKRELCKFYITGFCARAENCPYMHGDF, and PCKLYHTTGNCINGDDCMFSHDPL. Over residues 485–495 the composition is skewed to acidic residues; it reads AEAGAEDEKEV. The tract at residues 485–567 is disordered; that stretch reads AEAGAEDEKE…LPTHEPLSPQ (83 aa). Composition is skewed to pro residues over residues 506–529 and 538–556; these read LPKPPPGVGLLPTPPRPPGPPAPT and GGPPPPPPPPPPPPGPPQM. Arginine 599 bears the Asymmetric dimethylarginine mark. Disordered regions lie at residues 601-691, 719-970, and 994-1304; these read PGPG…DSPH, PGLV…SHIK, and LPIP…PFCQ. Residues 603-622 are compositionally biased toward pro residues; the sequence is PGGPSGPMGPGPNMGPPGPM. Residues 628 to 660 show a composition bias toward basic and acidic residues; that stretch reads PDMHPDMHPDMHPDMHPDMHPDMHPDMHPDMHP. The span at 669-683 shows a compositional bias: pro residues; it reads NPGPPMGPGGPPMMP. Residues 778-809 are a coiled coil; it reads ALYLRIQQKQQEEERARRLAESSKQDRENEEG. Residues 787 to 804 are compositionally biased toward basic and acidic residues; it reads QQEEERARRLAESSKQDR. A phosphoserine mark is found at serine 816 and serine 817. Positions 824–852 are enriched in polar residues; the sequence is SSVTSILKTLRQQTSSRPQASVGEPSSSG. Residues 869-884 are compositionally biased toward basic and acidic residues; the sequence is SDPRLSRDPRLSRHAE. Residues serine 913, serine 916, and serine 917 each carry the phosphoserine modification. Residues 913–929 show a composition bias toward low complexity; sequence SLHSSPAGPSSSKGQPP. Over residues 994–1005 the composition is skewed to pro residues; sequence LPIPKQDVPPVP. 2 stretches are compositionally biased toward polar residues: residues 1028–1044 and 1058–1067; these read NTRQRPGSTDPSTSGSN and VNVNTPGQSE. Residues 1068–1085 show a composition bias toward basic and acidic residues; that stretch reads KPSDPRVRKTPTDPRLQK. 2 stretches are compositionally biased toward low complexity: residues 1098–1129 and 1137–1146; these read PCPTEASPPAASPSGDSSPPATAPYDPRVLAA and SSGQSSVLSG. Phosphoserine occurs at positions 1104, 1109, 1111, and 1115. A Phosphothreonine modification is found at threonine 1119. Over residues 1204-1220 the composition is skewed to polar residues; it reads KASTDGATATDRYNSYN. Low complexity predominate over residues 1225-1235; it reads KATAAPTAASS. A phosphoserine mark is found at serine 1270 and serine 1276.

This sequence belongs to the suppressor of sable family. As to quaternary structure, interacts with WDR82.

The protein localises to the chromosome. RNA-binding protein that suppresses transcription of long non-coding RNAs (lncRNAs). LncRNAs are defined as transcripts more than 200 nucleotides that are not translated into protein. Together with WDR82, part of a transcription termination checkpoint that promotes transcription termination of lncRNAs and their subsequent degradation by the exosome. The transcription termination checkpoint is activated by the inefficiently spliced first exon of lncRNAs. This chain is Zinc finger CCCH domain-containing protein 4, found in Mus musculus (Mouse).